The chain runs to 368 residues: 3-dehydroquinate synthase (368 aa).

Residues 71–76 (DGEAAK), 105–109 (GATTD), 129–130 (TT), Lys142, and Lys151 contribute to the NAD(+) site. Glu184, His247, and His263 together coordinate Zn(2+).

Belongs to the sugar phosphate cyclases superfamily. Dehydroquinate synthase family. It depends on Co(2+) as a cofactor. Requires Zn(2+) as cofactor. NAD(+) is required as a cofactor.

The protein resides in the cytoplasm. It catalyses the reaction 7-phospho-2-dehydro-3-deoxy-D-arabino-heptonate = 3-dehydroquinate + phosphate. The protein operates within metabolic intermediate biosynthesis; chorismate biosynthesis; chorismate from D-erythrose 4-phosphate and phosphoenolpyruvate: step 2/7. In terms of biological role, catalyzes the conversion of 3-deoxy-D-arabino-heptulosonate 7-phosphate (DAHP) to dehydroquinate (DHQ). The sequence is that of 3-dehydroquinate synthase from Thermobifida fusca (strain YX).